The sequence spans 74 residues: U12-theraphotoxin-Hs1a (74 aa).

The N-terminal stretch at 1–20 (MNVKILLLLVGLNLVMHSNA) is a signal peptide. Residues 21–40 (TGDSETNPAETLFIEEIFRR) constitute a propeptide that is removed on maturation. 3 disulfide bridges follow: C42–C56, C49–C61, and C55–C71.

The protein belongs to the neurotoxin 35 family. Expressed by the venom gland.

It is found in the secreted. Its function is as follows. Putative ion channel inhibitor. The polypeptide is U12-theraphotoxin-Hs1a (Cyriopagopus schmidti (Chinese bird spider)).